Here is a 62-residue protein sequence, read N- to C-terminus: DNA-directed RNA polymerase subunit Rpo10 (62 aa).

Residues Cys-6, Cys-9, Cys-43, and Cys-44 each coordinate Zn(2+).

Belongs to the archaeal Rpo10/eukaryotic RPB10 RNA polymerase subunit family. As to quaternary structure, part of the RNA polymerase complex. Zn(2+) is required as a cofactor.

It localises to the cytoplasm. The enzyme catalyses RNA(n) + a ribonucleoside 5'-triphosphate = RNA(n+1) + diphosphate. Functionally, DNA-dependent RNA polymerase (RNAP) catalyzes the transcription of DNA into RNA using the four ribonucleoside triphosphates as substrates. This is DNA-directed RNA polymerase subunit Rpo10 from Methanocorpusculum labreanum (strain ATCC 43576 / DSM 4855 / Z).